Consider the following 131-residue polypeptide: Small ribosomal subunit protein uS8 (131 aa).

The protein belongs to the universal ribosomal protein uS8 family. Part of the 30S ribosomal subunit. Contacts proteins S5 and S12.

Functionally, one of the primary rRNA binding proteins, it binds directly to 16S rRNA central domain where it helps coordinate assembly of the platform of the 30S subunit. This Wolbachia sp. subsp. Brugia malayi (strain TRS) protein is Small ribosomal subunit protein uS8.